The following is a 456-amino-acid chain: Exodeoxyribonuclease 7 large subunit (456 aa).

This sequence belongs to the XseA family. Heterooligomer composed of large and small subunits.

Its subcellular location is the cytoplasm. The catalysed reaction is Exonucleolytic cleavage in either 5'- to 3'- or 3'- to 5'-direction to yield nucleoside 5'-phosphates.. Functionally, bidirectionally degrades single-stranded DNA into large acid-insoluble oligonucleotides, which are then degraded further into small acid-soluble oligonucleotides. The sequence is that of Exodeoxyribonuclease 7 large subunit from Escherichia coli O157:H7.